Here is a 162-residue protein sequence, read N- to C-terminus: ATP synthase subunit b 1 (162 aa).

Residues 3 to 23 (FLDATFFAFVGLVLFLALVVY) form a helical membrane-spanning segment.

This sequence belongs to the ATPase B chain family. F-type ATPases have 2 components, F(1) - the catalytic core - and F(0) - the membrane proton channel. F(1) has five subunits: alpha(3), beta(3), gamma(1), delta(1), epsilon(1). F(0) has three main subunits: a(1), b(2) and c(10-14). The alpha and beta chains form an alternating ring which encloses part of the gamma chain. F(1) is attached to F(0) by a central stalk formed by the gamma and epsilon chains, while a peripheral stalk is formed by the delta and b chains.

The protein resides in the cell inner membrane. Functionally, f(1)F(0) ATP synthase produces ATP from ADP in the presence of a proton or sodium gradient. F-type ATPases consist of two structural domains, F(1) containing the extramembraneous catalytic core and F(0) containing the membrane proton channel, linked together by a central stalk and a peripheral stalk. During catalysis, ATP synthesis in the catalytic domain of F(1) is coupled via a rotary mechanism of the central stalk subunits to proton translocation. Component of the F(0) channel, it forms part of the peripheral stalk, linking F(1) to F(0). In Rhizobium johnstonii (strain DSM 114642 / LMG 32736 / 3841) (Rhizobium leguminosarum bv. viciae), this protein is ATP synthase subunit b 1.